The primary structure comprises 384 residues: Succinyl-diaminopimelate desuccinylase (384 aa).

His75 provides a ligand contact to Zn(2+). Asp77 is an active-site residue. Asp108 serves as a coordination point for Zn(2+). The active-site Proton acceptor is Glu142. Residues Glu143, Glu171, and His357 each coordinate Zn(2+).

It belongs to the peptidase M20A family. DapE subfamily. As to quaternary structure, homodimer. Zn(2+) is required as a cofactor. It depends on Co(2+) as a cofactor.

The catalysed reaction is N-succinyl-(2S,6S)-2,6-diaminopimelate + H2O = (2S,6S)-2,6-diaminopimelate + succinate. It participates in amino-acid biosynthesis; L-lysine biosynthesis via DAP pathway; LL-2,6-diaminopimelate from (S)-tetrahydrodipicolinate (succinylase route): step 3/3. In terms of biological role, catalyzes the hydrolysis of N-succinyl-L,L-diaminopimelic acid (SDAP), forming succinate and LL-2,6-diaminopimelate (DAP), an intermediate involved in the bacterial biosynthesis of lysine and meso-diaminopimelic acid, an essential component of bacterial cell walls. The sequence is that of Succinyl-diaminopimelate desuccinylase from Shewanella oneidensis (strain ATCC 700550 / JCM 31522 / CIP 106686 / LMG 19005 / NCIMB 14063 / MR-1).